The chain runs to 268 residues: Tryptophan synthase alpha chain (268 aa).

Active-site proton acceptor residues include Glu-49 and Asp-60.

It belongs to the TrpA family. In terms of assembly, tetramer of two alpha and two beta chains.

It catalyses the reaction (1S,2R)-1-C-(indol-3-yl)glycerol 3-phosphate + L-serine = D-glyceraldehyde 3-phosphate + L-tryptophan + H2O. It functions in the pathway amino-acid biosynthesis; L-tryptophan biosynthesis; L-tryptophan from chorismate: step 5/5. Functionally, the alpha subunit is responsible for the aldol cleavage of indoleglycerol phosphate to indole and glyceraldehyde 3-phosphate. This is Tryptophan synthase alpha chain from Yersinia pestis bv. Antiqua (strain Antiqua).